Here is a 350-residue protein sequence, read N- to C-terminus: 3-isopropylmalate dehydrogenase (350 aa).

71 to 84 (GPKWADAPRHLRPE) provides a ligand contact to NAD(+). Positions 91, 101, 129, and 220 each coordinate substrate. Mg(2+) contacts are provided by Asp220, Asp244, and Asp248. 279–291 (GSAPDIAGKGLAN) contributes to the NAD(+) binding site.

The protein belongs to the isocitrate and isopropylmalate dehydrogenases family. LeuB type 1 subfamily. In terms of assembly, homodimer. Mg(2+) is required as a cofactor. It depends on Mn(2+) as a cofactor.

It is found in the cytoplasm. The catalysed reaction is (2R,3S)-3-isopropylmalate + NAD(+) = 4-methyl-2-oxopentanoate + CO2 + NADH. It participates in amino-acid biosynthesis; L-leucine biosynthesis; L-leucine from 3-methyl-2-oxobutanoate: step 3/4. In terms of biological role, catalyzes the oxidation of 3-carboxy-2-hydroxy-4-methylpentanoate (3-isopropylmalate) to 3-carboxy-4-methyl-2-oxopentanoate. The product decarboxylates to 4-methyl-2 oxopentanoate. This is 3-isopropylmalate dehydrogenase from Caulobacter vibrioides (strain ATCC 19089 / CIP 103742 / CB 15) (Caulobacter crescentus).